A 103-amino-acid chain; its full sequence is Histone H4.1 (103 aa).

Over residues 1 to 14 (MSGRGKGGKGLGKG) the composition is skewed to gly residues. The interval 1–20 (MSGRGKGGKGLGKGGAKRHR) is disordered. An N6-acetyl-N6-methyllysine; alternate modification is found at lysine 6. Lysine 6, lysine 9, and lysine 13 each carry N6-methyllysine; alternate. Lysine 13 carries the N6-acetyl-N6-methyllysine; alternate modification. Residues 17–21 (KRHRK) mediate DNA binding. Position 92 is an N6-glutaryllysine (lysine 92).

This sequence belongs to the histone H4 family. The nucleosome is a histone octamer containing two molecules each of H2A, H2B, H3 and H4 assembled in one H3-H4 heterotetramer and two H2A-H2B heterodimers. The octamer wraps approximately 147 bp of DNA. Glutarylation at Lys-92 (H4K91glu) destabilizes nucleosomes by promoting dissociation of the H2A-H2B dimers from nucleosomes.

The protein resides in the nucleus. Its subcellular location is the chromosome. In terms of biological role, core component of nucleosome. Nucleosomes wrap and compact DNA into chromatin, limiting DNA accessibility to the cellular machineries which require DNA as a template. Histones thereby play a central role in transcription regulation, DNA repair, DNA replication and chromosomal stability. DNA accessibility is regulated via a complex set of post-translational modifications of histones, also called histone code, and nucleosome remodeling. The sequence is that of Histone H4.1 (HHF1) from Eremothecium gossypii (strain ATCC 10895 / CBS 109.51 / FGSC 9923 / NRRL Y-1056) (Yeast).